The primary structure comprises 346 residues: Cytochrome c551 peroxidase (346 aa).

Residues 1–23 (MQSSQLLPLGSLLLSFATPLAQA) form the signal peptide. The heme c site is built by cysteine 74, cysteine 77, histidine 78, cysteine 220, cysteine 223, histidine 224, histidine 284, and methionine 298.

Heme c is required as a cofactor. Post-translationally, binds 2 heme groups per subunit. Sequencing of the whole protein indicates about 20% starts on Val-247.

The protein localises to the periplasm. It catalyses the reaction 2 Fe(II)-[cytochrome c] + H2O2 + 2 H(+) = 2 Fe(III)-[cytochrome c] + 2 H2O. Functionally, catalyzes the peroxidative oxidation of azurin and cytochrome c551. Likely to provide protection against toxic peroxides. This chain is Cytochrome c551 peroxidase (ccpA), found in Pseudomonas aeruginosa (strain ATCC 15692 / DSM 22644 / CIP 104116 / JCM 14847 / LMG 12228 / 1C / PRS 101 / PAO1).